The chain runs to 191 residues: Holliday junction branch migration complex subunit RuvA (191 aa).

The domain I stretch occupies residues 1–64 (MIGTLSGIIE…DNVPQLYGFT (64 aa)). Positions 65 to 145 (DTEEQNCLKM…FNIMDKRGPS (81 aa)) are domain II. A flexible linker region spans residues 146–149 (VEDS). The domain III stretch occupies residues 149 to 191 (SDALSALLSLGYEKTRVLNALEKVGVSHNLSDTVRFALKELSK).

Belongs to the RuvA family. As to quaternary structure, homotetramer. Forms an RuvA(8)-RuvB(12)-Holliday junction (HJ) complex. HJ DNA is sandwiched between 2 RuvA tetramers; dsDNA enters through RuvA and exits via RuvB. An RuvB hexamer assembles on each DNA strand where it exits the tetramer. Each RuvB hexamer is contacted by two RuvA subunits (via domain III) on 2 adjacent RuvB subunits; this complex drives branch migration. In the full resolvosome a probable DNA-RuvA(4)-RuvB(12)-RuvC(2) complex forms which resolves the HJ.

The protein resides in the cytoplasm. In terms of biological role, the RuvA-RuvB-RuvC complex processes Holliday junction (HJ) DNA during genetic recombination and DNA repair, while the RuvA-RuvB complex plays an important role in the rescue of blocked DNA replication forks via replication fork reversal (RFR). RuvA specifically binds to HJ cruciform DNA, conferring on it an open structure. The RuvB hexamer acts as an ATP-dependent pump, pulling dsDNA into and through the RuvAB complex. HJ branch migration allows RuvC to scan DNA until it finds its consensus sequence, where it cleaves and resolves the cruciform DNA. The chain is Holliday junction branch migration complex subunit RuvA from Anaplasma phagocytophilum (strain HZ).